Consider the following 142-residue polypeptide: Large ribosomal subunit protein uL13c (142 aa).

It belongs to the universal ribosomal protein uL13 family. Part of the 50S ribosomal subunit.

The protein resides in the plastid. Its subcellular location is the chloroplast. This Porphyra purpurea (Red seaweed) protein is Large ribosomal subunit protein uL13c.